Here is a 204-residue protein sequence, read N- to C-terminus: uncharacterized protein (204 aa).

His9 functions as the Tele-phosphohistidine intermediate in the catalytic mechanism. The active-site Proton donor/acceptor is the Glu86.

This sequence belongs to the phosphoglycerate mutase family.

This is an uncharacterized protein from Acanthamoeba polyphaga (Amoeba).